A 375-amino-acid polypeptide reads, in one-letter code: Queuine tRNA-ribosyltransferase (375 aa).

D93 serves as the catalytic Proton acceptor. Residues 93-97 (DSGGY), D147, Q194, and G221 contribute to the substrate site. Residues 252–258 (GVGKPDD) form an RNA binding region. D271 (nucleophile) is an active-site residue. The interval 276–280 (TRSGR) is RNA binding; important for wobble base 34 recognition. The Zn(2+) site is built by C309, C311, C314, and H340.

This sequence belongs to the queuine tRNA-ribosyltransferase family. As to quaternary structure, homodimer. Within each dimer, one monomer is responsible for RNA recognition and catalysis, while the other monomer binds to the replacement base PreQ1. Zn(2+) serves as cofactor.

The catalysed reaction is 7-aminomethyl-7-carbaguanine + guanosine(34) in tRNA = 7-aminomethyl-7-carbaguanosine(34) in tRNA + guanine. It participates in tRNA modification; tRNA-queuosine biosynthesis. Its function is as follows. Catalyzes the base-exchange of a guanine (G) residue with the queuine precursor 7-aminomethyl-7-deazaguanine (PreQ1) at position 34 (anticodon wobble position) in tRNAs with GU(N) anticodons (tRNA-Asp, -Asn, -His and -Tyr). Catalysis occurs through a double-displacement mechanism. The nucleophile active site attacks the C1' of nucleotide 34 to detach the guanine base from the RNA, forming a covalent enzyme-RNA intermediate. The proton acceptor active site deprotonates the incoming PreQ1, allowing a nucleophilic attack on the C1' of the ribose to form the product. After dissociation, two additional enzymatic reactions on the tRNA convert PreQ1 to queuine (Q), resulting in the hypermodified nucleoside queuosine (7-(((4,5-cis-dihydroxy-2-cyclopenten-1-yl)amino)methyl)-7-deazaguanosine). The polypeptide is Queuine tRNA-ribosyltransferase (Sphingopyxis alaskensis (strain DSM 13593 / LMG 18877 / RB2256) (Sphingomonas alaskensis)).